A 1589-amino-acid chain; its full sequence is Mediator of RNA polymerase II transcription subunit 23 (1589 aa).

A disordered region spans residues 1381–1499 (YVSQNEPAPP…PPTPAPMHHQ (119 aa)). Residues 1392–1410 (TPEREKTPERKDQQKEQQE) show a composition bias toward basic and acidic residues. Residues 1457–1470 (LHHQQQQQQHLSQM) show a composition bias toward low complexity.

This sequence belongs to the Mediator complex subunit 23 family. As to quaternary structure, component of the Mediator complex.

The protein localises to the nucleus. In terms of biological role, component of the Mediator complex, a coactivator involved in the regulated transcription of nearly all RNA polymerase II-dependent genes. Mediator functions as a bridge to convey information from gene-specific regulatory proteins to the basal RNA polymerase II transcription machinery. Mediator is recruited to promoters by direct interactions with regulatory proteins and serves as a scaffold for the assembly of a functional preinitiation complex with RNA polymerase II and the general transcription factors. The polypeptide is Mediator of RNA polymerase II transcription subunit 23 (sur-2) (Caenorhabditis briggsae).